The primary structure comprises 444 residues: Spermatogenesis-associated protein 1 (444 aa).

Positions 268 to 403 form a coiled coil; that stretch reads SLLKIEREKI…RKLDTDKMKL (136 aa).

As to quaternary structure, interacts with IFT20. As to expression, highly abundant in the testis, and is also expressed in the heart and kidney (at protein level).

The protein resides in the cytoplasmic vesicle. The protein localises to the secretory vesicle. It is found in the acrosome. The protein is Spermatogenesis-associated protein 1 (Spata1) of Mus musculus (Mouse).